A 155-amino-acid chain; its full sequence is Probable jacalin-related lectin 26 (155 aa).

2 helical membrane-spanning segments follow: residues 26–48 and 127–149; these read AYLYLSFHLKLLYSVPASYIAMI and VSFVSITIIYFCVCVRSGQVLFL. The region spanning 47–155 is the Jacalin-type lectin domain; that stretch reads MIRAGSVGKK…VLFLMKFKRS (109 aa).

The protein belongs to the jacalin lectin family.

It is found in the membrane. The sequence is that of Probable jacalin-related lectin 26 (JAL26) from Arabidopsis thaliana (Mouse-ear cress).